A 1006-amino-acid polypeptide reads, in one-letter code: SAC3 family protein A (1006 aa).

Disordered stretches follow at residues 1-75 (MNHG…GPAT), 106-162 (TPYQ…PGSY), 183-239 (GYQS…TIAT), 266-326 (GTEK…AVST), 516-550 (TVTT…RWEP), 595-638 (GFKP…SDKD), and 650-690 (AGSA…GNLH). Composition is skewed to polar residues over residues 26 to 75 (GSQT…GPAT) and 106 to 115 (TPYQTSSDPH). Residues 116 to 140 (NYSNTGYSNYYSGYQQQPSQSYPQP) show a composition bias toward low complexity. Residues 144 to 162 (YQNTGAPQPLSSFQNPGSY) show a composition bias toward polar residues. 2 stretches are compositionally biased toward polar residues: residues 269 to 282 (KLST…SQSF) and 313 to 326 (SHPP…AVST). Low complexity predominate over residues 516 to 539 (TVTTTNVTNSESSSAQLSSLQNKS). Positions 609–618 (SFQRPVKRQR) are enriched in basic residues. Positions 653–680 (AEEKKRRDSRSKRFEKIQGHSRGNDLTK) are enriched in basic and acidic residues. The 175-residue stretch at 804–978 (DLPEYNQCLS…DMLLDTKATS (175 aa)) folds into the PCI domain.

This sequence belongs to the SAC3 family. In terms of assembly, interacts with EER5, SAC3B and CML20.

The protein resides in the nucleus. Functionally, component of the TREX-2 complex (transcription and export complex 2), a muliprotein complex that functions in docking export-competent ribonucleoprotein particles (mRNPs) to the nuclear entrance of the nuclear pore complex (nuclear basket). TREX-2 participates in mRNA export and accurate chromatin positioning in the nucleus by tethering genes to the nuclear periphery. This Arabidopsis thaliana (Mouse-ear cress) protein is SAC3 family protein A.